The primary structure comprises 277 residues: Small ribosomal subunit protein uS2 (277 aa).

Residues 1-78 (MSENDEGTDA…PADEEPVLDE (78 aa)) are disordered.

Belongs to the universal ribosomal protein uS2 family.

This Natronomonas pharaonis (strain ATCC 35678 / DSM 2160 / CIP 103997 / JCM 8858 / NBRC 14720 / NCIMB 2260 / Gabara) (Halobacterium pharaonis) protein is Small ribosomal subunit protein uS2.